Consider the following 304-residue polypeptide: Protease HtpX homolog (304 aa).

The next 2 helical transmembrane spans lie at 14–34 (VFIVIGFFIFVLMVGAAIGII) and 39–59 (YLNGLILAAVIGAFYILIMVM). His-144 contributes to the Zn(2+) binding site. The active site involves Glu-145. His-148 is a Zn(2+) binding site. Helical transmembrane passes span 161–181 (IALVAVIAILSDLAMRMIFWG) and 202–222 (LIIYIVALVFVVLAPIIATAI). Glu-231 lines the Zn(2+) pocket. The segment at 276-295 (SPLKSKKDKPGIFDSHPPIS) is disordered.

It belongs to the peptidase M48B family. It depends on Zn(2+) as a cofactor.

Its subcellular location is the cell membrane. The chain is Protease HtpX homolog from Listeria welshimeri serovar 6b (strain ATCC 35897 / DSM 20650 / CCUG 15529 / CIP 8149 / NCTC 11857 / SLCC 5334 / V8).